The sequence spans 1292 residues: SH3 and multiple ankyrin repeat domains protein 2 (1292 aa).

Residues 56–150 enclose the PDZ domain; it reads TVVLQKKDNE…HLVLKVVTVT (95 aa). Disordered stretches follow at residues 155–176, 331–393, 488–508, 604–656, 671–743, 774–811, and 938–968; these read PDDT…TALS, MPDA…SDNV, IKEP…METD, SSNA…KLLD, ALKE…EKKN, LTES…SECG, and IEEV…TLSS. Positions 338-354 are enriched in pro residues; it reads IPPPPATLPPSPPPPSP. Positions 355-365 are enriched in low complexity; it reads SSFNSPKSPAP. The segment covering 375–384 has biased composition (polar residues); it reads FTQNSGTKSP. Low complexity predominate over residues 492–504; that stretch reads STSSSGKSSQGSS. Over residues 604 to 623 the composition is skewed to polar residues; sequence SSNAFTNNDSSHQGDVSNAR. The segment covering 719 to 743 has biased composition (basic and acidic residues); sequence KRQETESKHEPDSSKEEKRQGEKKN. Residues 941-952 show a composition bias toward basic and acidic residues; sequence VDSRSGSDHHLE. A compositionally biased stretch (low complexity) spans 953-968; that stretch reads TTSTISTVSSISTLSS. The SH3-binding motif lies at 991–997; the sequence is PPVPPKP. Residues 1087–1115 are disordered; it reads TKTGEGLDSPTGMKTASLSTRGTDALSTV. Polar residues predominate over residues 1098 to 1115; the sequence is GMKTASLSTRGTDALSTV. Positions 1229 to 1292 constitute an SAM domain; it reads WTKQDVAEWL…ERALKQLLDR (64 aa).

This sequence belongs to the SHANK family.

It is found in the cytoplasm. The protein resides in the synapse. Its subcellular location is the postsynaptic density. Its function is as follows. Seems to be an adapter protein in the postsynaptic density (PSD) of excitatory synapses that interconnects receptors of the postsynaptic membrane including NMDA-type and metabotropic glutamate receptors, and the actin-based cytoskeleton. May play a role in the structural and functional organization of the dendritic spine and synaptic junction. The polypeptide is SH3 and multiple ankyrin repeat domains protein 2 (shank2) (Xenopus laevis (African clawed frog)).